We begin with the raw amino-acid sequence, 513 residues long: Cobyric acid synthase (513 aa).

Positions 270–470 (RLRIAIVAYP…THGLFESPAV (201 aa)) constitute a GATase cobBQ-type domain. Cysteine 351 (nucleophile) is an active-site residue. Residue histidine 462 is part of the active site.

The protein belongs to the CobB/CobQ family. CobQ subfamily.

The protein operates within cofactor biosynthesis; adenosylcobalamin biosynthesis. Functionally, catalyzes amidations at positions B, D, E, and G on adenosylcobyrinic A,C-diamide. NH(2) groups are provided by glutamine, and one molecule of ATP is hydrogenolyzed for each amidation. The protein is Cobyric acid synthase of Leptothrix cholodnii (strain ATCC 51168 / LMG 8142 / SP-6) (Leptothrix discophora (strain SP-6)).